The sequence spans 180 residues: Probable chorismate pyruvate-lyase (180 aa).

Substrate-binding residues include arginine 73, leucine 111, and glutamate 170.

Belongs to the UbiC family.

It is found in the cytoplasm. It catalyses the reaction chorismate = 4-hydroxybenzoate + pyruvate. The protein operates within cofactor biosynthesis; ubiquinone biosynthesis. Removes the pyruvyl group from chorismate, with concomitant aromatization of the ring, to provide 4-hydroxybenzoate (4HB) for the ubiquinone pathway. The sequence is that of Probable chorismate pyruvate-lyase from Nitrosospira multiformis (strain ATCC 25196 / NCIMB 11849 / C 71).